Here is a 319-residue protein sequence, read N- to C-terminus: MFPANWTSVKVFFFLGFFHYPKVQVIIFAVCLLMYLITLLGNIFLISITILDSHLHTPMYLFLSNLSFLDIWYSSSALSPMLANFVSGRNTISFSGCATQMYLSLAMGSTECVLLPMMAYDRYVAICNPLRYPVIMNRRTCVQIAAGSWMTGCLTAMVEMMSVLPLSLCGNSIINHFTCEILAILKLVCVDTSLVQLIMLVISVLLLPMPMLLICISYAFILASILRISSVEGRSKAFSTCTAHLMVVVLFYGTALSMHLKPSAVDSQEIDKFMALVYAGQTPMLNPIIYSLRNKEVKVALKKLLIRNHFNTAFISILK.

Residues 1–25 (MFPANWTSVKVFFFLGFFHYPKVQV) lie on the Extracellular side of the membrane. N-linked (GlcNAc...) asparagine glycosylation is present at N5. Residues 26–46 (IIFAVCLLMYLITLLGNIFLI) traverse the membrane as a helical segment. Residues 47-54 (SITILDSH) are Cytoplasmic-facing. A helical membrane pass occupies residues 55 to 75 (LHTPMYLFLSNLSFLDIWYSS). Topologically, residues 76-99 (SALSPMLANFVSGRNTISFSGCAT) are extracellular. A disulfide bridge links C97 with C189. Residues 100 to 120 (QMYLSLAMGSTECVLLPMMAY) traverse the membrane as a helical segment. The Cytoplasmic segment spans residues 121–139 (DRYVAICNPLRYPVIMNRR). A helical transmembrane segment spans residues 140-160 (TCVQIAAGSWMTGCLTAMVEM). Topologically, residues 161 to 197 (MSVLPLSLCGNSIINHFTCEILAILKLVCVDTSLVQL) are extracellular. Residues 198-217 (IMLVISVLLLPMPMLLICIS) traverse the membrane as a helical segment. Residues 218–237 (YAFILASILRISSVEGRSKA) are Cytoplasmic-facing. Residues 238-258 (FSTCTAHLMVVVLFYGTALSM) form a helical membrane-spanning segment. Over 259–271 (HLKPSAVDSQEID) the chain is Extracellular. A helical membrane pass occupies residues 272–292 (KFMALVYAGQTPMLNPIIYSL). The Cytoplasmic segment spans residues 293–319 (RNKEVKVALKKLLIRNHFNTAFISILK).

It belongs to the G-protein coupled receptor 1 family.

It is found in the cell membrane. Functionally, odorant receptor. In Homo sapiens (Human), this protein is Olfactory receptor 13F1 (OR13F1).